Consider the following 334-residue polypeptide: WD repeat-containing protein 54 (334 aa).

3 WD repeats span residues 116–155 (SSVQ…PNIV), 162–206 (GHQT…TLLT), and 250–289 (AHAR…ESGS).

In terms of assembly, homodimer and homotrimer; forms tight forms of dimers and trimers. Interacts with IZUMO1 and IZUMO1R/JUNO. Cross-linked to tightly form both dimers and trimers by TGM2. Cross-linking enhances the activation of EGF receptor-mediated signaling pathway. Cross-linking is inhibited by EGF. Post-translationally, ubiquitinated. EGF increases ubiquitination.

It is found in the vesicle. The protein resides in the cytoplasm. It localises to the cell membrane. Functionally, plays a role in the adhesion and fusion of the sperm-oocyte membrane through its interactions with IZUMO1 and IZUMO1R/JUNO. When cross-linked to form dimers and trimers, it has a regulatory effect on ERK signaling pathway activity in response to EGF stimulation. Colocalizes with the EGF receptor in WDR54-specific vesicle where it sustains the internalization and controls the degradation of the EGF receptor after EGF stimulation. This chain is WD repeat-containing protein 54, found in Mus musculus (Mouse).